Reading from the N-terminus, the 292-residue chain is tRNA (guanine-N(1)-)-methyltransferase (292 aa).

Residues Gly-151 and 175–180 (IGDYVL) each bind S-adenosyl-L-methionine.

Belongs to the RNA methyltransferase TrmD family. Homodimer.

The protein localises to the cytoplasm. It catalyses the reaction guanosine(37) in tRNA + S-adenosyl-L-methionine = N(1)-methylguanosine(37) in tRNA + S-adenosyl-L-homocysteine + H(+). Its function is as follows. Specifically methylates guanosine-37 in various tRNAs. The sequence is that of tRNA (guanine-N(1)-)-methyltransferase from Corynebacterium diphtheriae (strain ATCC 700971 / NCTC 13129 / Biotype gravis).